A 624-amino-acid polypeptide reads, in one-letter code: uncharacterized protein (624 aa).

Residues S113–K249 are disordered. Residues T118–S225 are compositionally biased toward low complexity. Basic and acidic residues predominate over residues A226–K249.

This is an uncharacterized protein from Saccharomyces cerevisiae (strain ATCC 204508 / S288c) (Baker's yeast).